The sequence spans 132 residues: ATP synthase epsilon chain (132 aa).

The protein belongs to the ATPase epsilon chain family. F-type ATPases have 2 components, CF(1) - the catalytic core - and CF(0) - the membrane proton channel. CF(1) has five subunits: alpha(3), beta(3), gamma(1), delta(1), epsilon(1). CF(0) has three main subunits: a, b and c.

It localises to the cell membrane. In terms of biological role, produces ATP from ADP in the presence of a proton gradient across the membrane. The chain is ATP synthase epsilon chain from Brevibacillus brevis (strain 47 / JCM 6285 / NBRC 100599).